The sequence spans 662 residues: Tubulin--tyrosine ligase-like protein 12 (662 aa).

Positions 324–660 (LKKRKIKVYA…LDEIDPTKVT (337 aa)) constitute a TTL domain. ATP contacts are provided by residues 472–475 (CEYI), Lys491, and Asp493.

It belongs to the tubulin--tyrosine ligase family.

Its function is as follows. Regulates microtubule dynamics in uterine muscle cells. The chain is Tubulin--tyrosine ligase-like protein 12 from Caenorhabditis elegans.